Here is a 450-residue protein sequence, read N- to C-terminus: Casein kinase 1-like protein 1 (450 aa).

In terms of domain architecture, Protein kinase spans 9-278 (FRLGRKIGSG…LKRIFRDLFI (270 aa)). ATP contacts are provided by residues 15–23 (IGSGSFGEI) and Lys38. Catalysis depends on Asp128, which acts as the Proton acceptor. The segment at 311-450 (AVGTSAALPP…LQVSDEHHPH (140 aa)) is disordered. Basic and acidic residues predominate over residues 328 to 342 (YTGEEEGRPHMESSR). Residues 349–365 (LDNSGNISNQPTSSSAR) are compositionally biased toward polar residues. A compositionally biased stretch (low complexity) spans 371 to 382 (SSSLFAQSAGSS).

This sequence belongs to the protein kinase superfamily. CK1 Ser/Thr protein kinase family. Casein kinase I subfamily. In terms of assembly, monomer. In terms of processing, autophosphorylated. In terms of tissue distribution, expressed in flowers.

Its subcellular location is the cytoplasm. It is found in the cell junction. The protein localises to the plasmodesma. The catalysed reaction is L-seryl-[protein] + ATP = O-phospho-L-seryl-[protein] + ADP + H(+). It catalyses the reaction L-threonyl-[protein] + ATP = O-phospho-L-threonyl-[protein] + ADP + H(+). Casein kinases are operationally defined by their preferential utilization of acidic proteins such as caseins as substrates. It can phosphorylate a large number of proteins. This is Casein kinase 1-like protein 1 from Arabidopsis thaliana (Mouse-ear cress).